The sequence spans 333 residues: MVNQHTAHQLPFASQLPFASTQLAATLISLDDWALATLVGPDTVKYLQGQVTADVGALPDNGHILCAHCDAKGKMWSNLRLFHHGEGFAFIERRNLRDVQLSELKKYAVFSKTAIAPDDNTILLGAAGAGIRELLASVFSQLPDAEHPVVQHEGATLLHFAHPAERFLLVLSPEPSASLLEQLGDKVSLNDSRQWLTLDIEAGQPIIDSANSAQFIPQATNLQALNGISFSKGCYTGQEMVARAKYRGANKRALYWLAGKANKVPQAGDDLELQLGENWRRTGTVLAASQLQNGDVWVQAVLNNDLNAENTLRVRDDADSQLTVQPLPYEITD.

Trp33 and Trp195 together coordinate folate.

Belongs to the tRNA-modifying YgfZ family.

Its subcellular location is the cytoplasm. Functionally, folate-binding protein involved in regulating the level of ATP-DnaA and in the modification of some tRNAs. It is probably a key factor in regulatory networks that act via tRNA modification, such as initiation of chromosomal replication. In Pectobacterium atrosepticum (strain SCRI 1043 / ATCC BAA-672) (Erwinia carotovora subsp. atroseptica), this protein is tRNA-modifying protein YgfZ.